Here is a 298-residue protein sequence, read N- to C-terminus: ATP phosphoribosyltransferase (298 aa).

This sequence belongs to the ATP phosphoribosyltransferase family. Long subfamily. Requires Mg(2+) as cofactor.

The protein resides in the cytoplasm. The catalysed reaction is 1-(5-phospho-beta-D-ribosyl)-ATP + diphosphate = 5-phospho-alpha-D-ribose 1-diphosphate + ATP. It participates in amino-acid biosynthesis; L-histidine biosynthesis; L-histidine from 5-phospho-alpha-D-ribose 1-diphosphate: step 1/9. Its activity is regulated as follows. Feedback inhibited by histidine. In terms of biological role, catalyzes the condensation of ATP and 5-phosphoribose 1-diphosphate to form N'-(5'-phosphoribosyl)-ATP (PR-ATP). Has a crucial role in the pathway because the rate of histidine biosynthesis seems to be controlled primarily by regulation of HisG enzymatic activity. In Aliivibrio salmonicida (strain LFI1238) (Vibrio salmonicida (strain LFI1238)), this protein is ATP phosphoribosyltransferase.